A 191-amino-acid chain; its full sequence is Peptide methionine sulfoxide reductase MsrA (191 aa).

Residue cysteine 21 is part of the active site.

The protein belongs to the MsrA Met sulfoxide reductase family.

The enzyme catalyses L-methionyl-[protein] + [thioredoxin]-disulfide + H2O = L-methionyl-(S)-S-oxide-[protein] + [thioredoxin]-dithiol. It carries out the reaction [thioredoxin]-disulfide + L-methionine + H2O = L-methionine (S)-S-oxide + [thioredoxin]-dithiol. Functionally, has an important function as a repair enzyme for proteins that have been inactivated by oxidation. Catalyzes the reversible oxidation-reduction of methionine sulfoxide in proteins to methionine. The protein is Peptide methionine sulfoxide reductase MsrA of Ralstonia nicotianae (strain ATCC BAA-1114 / GMI1000) (Ralstonia solanacearum).